We begin with the raw amino-acid sequence, 351 residues long: Alanine racemase (351 aa).

The active-site Proton acceptor; specific for D-alanine is the K34. K34 carries the post-translational modification N6-(pyridoxal phosphate)lysine. Residue R126 participates in substrate binding. The active-site Proton acceptor; specific for L-alanine is Y248. M296 contacts substrate.

Belongs to the alanine racemase family. It depends on pyridoxal 5'-phosphate as a cofactor.

It catalyses the reaction L-alanine = D-alanine. The protein operates within amino-acid biosynthesis; D-alanine biosynthesis; D-alanine from L-alanine: step 1/1. Functionally, catalyzes the interconversion of L-alanine and D-alanine. May also act on other amino acids. The chain is Alanine racemase (alr) from Deinococcus radiodurans (strain ATCC 13939 / DSM 20539 / JCM 16871 / CCUG 27074 / LMG 4051 / NBRC 15346 / NCIMB 9279 / VKM B-1422 / R1).